The chain runs to 574 residues: Proline--tRNA ligase (574 aa).

Belongs to the class-II aminoacyl-tRNA synthetase family. ProS type 1 subfamily. In terms of assembly, homodimer.

It localises to the cytoplasm. The enzyme catalyses tRNA(Pro) + L-proline + ATP = L-prolyl-tRNA(Pro) + AMP + diphosphate. In terms of biological role, catalyzes the attachment of proline to tRNA(Pro) in a two-step reaction: proline is first activated by ATP to form Pro-AMP and then transferred to the acceptor end of tRNA(Pro). As ProRS can inadvertently accommodate and process non-cognate amino acids such as alanine and cysteine, to avoid such errors it has two additional distinct editing activities against alanine. One activity is designated as 'pretransfer' editing and involves the tRNA(Pro)-independent hydrolysis of activated Ala-AMP. The other activity is designated 'posttransfer' editing and involves deacylation of mischarged Ala-tRNA(Pro). The misacylated Cys-tRNA(Pro) is not edited by ProRS. This is Proline--tRNA ligase from Sodalis glossinidius (strain morsitans).